The primary structure comprises 305 residues: Protoheme IX farnesyltransferase (305 aa).

9 helical membrane-spanning segments follow: residues 31 to 51, 53 to 73, 98 to 118, 124 to 144, 153 to 173, 181 to 201, 221 to 241, 242 to 262, and 285 to 305; these read IQVLLLITTAGAMWIAGKGHV, PLLLLVTLLGGTLAASSANAF, ILPWQAALFATALGVASFAVL, LFAALLAISGIGFYVVIYTLW, IVIGGAAGAIPPLVGWAAVTG, VLFGIIFMWTPPHFWALAMMI, ATARQIFIYTLVLVPVTLVLY, PLGTMGWIYLLAAGALGLWLI, and SIFYLMLLFVAMGIDSIFLFA.

It belongs to the UbiA prenyltransferase family. Protoheme IX farnesyltransferase subfamily.

It is found in the cell inner membrane. It carries out the reaction heme b + (2E,6E)-farnesyl diphosphate + H2O = Fe(II)-heme o + diphosphate. It functions in the pathway porphyrin-containing compound metabolism; heme O biosynthesis; heme O from protoheme: step 1/1. In terms of biological role, converts heme B (protoheme IX) to heme O by substitution of the vinyl group on carbon 2 of heme B porphyrin ring with a hydroxyethyl farnesyl side group. The polypeptide is Protoheme IX farnesyltransferase (Gloeobacter violaceus (strain ATCC 29082 / PCC 7421)).